Reading from the N-terminus, the 1389-residue chain is CRISPR-associated endoribonuclease Cas13a (1389 aa).

Positions 1-347 (MGNLFGHKRW…DKHEKFKIER (347 aa)) are NTD. R219 contacts crRNA. Binds crRNA stretches follow at residues 330–342 (YIKS…KHEK), 405–408 (KKHY), and 432–436 (YRYLK). Positions 348-498 (ENKKDKIVKF…KLRHNDIDMT (151 aa)) are helical-1. Active-site for pre-crRNA processing residues include R438 and K441. K441 provides a ligand contact to crRNA. Residues 471–475 (KILKR) are binds crRNA. K489 contacts crRNA. Positions 499-636 (TVNTDDFSRL…LKISDEEVSK (138 aa)) are HEPN-like fold 1-I. The binds crRNA stretch occupies residues 502–509 (TDDFSRLH). Catalysis depends on for target ssRNA cleavage residues R597 and H602. The tract at residues 637–828 (ALNLDVVFKD…ERITVKTSDK (192 aa)) is helical-2. Q759 provides a ligand contact to crRNA. Residues 829–899 (TIVINDDFEY…ECITENWNLN (71 aa)) are HEPN-like fold 1-II. The tract at residues 853–858 (NKIRNR) is binds crRNA. CrRNA is bound at residue W865. 3 coiled-coil regions span residues 893 to 920 (TENW…FKIQ), 968 to 1046 (EIDK…FQEI), and 1101 to 1131 (KNKI…KYIK). The interval 900-1170 (LEEFIQKMKE…EYKKIRDLVE (271 aa)) is linker. The interval 1170 to 1290 (EFNYLNKIES…ISHFYIVRNP (121 aa)) is HEPN-like fold 2. Active-site for target ssRNA cleavage residues include R1278 and H1283. Binds crRNA stretches follow at residues 1311 to 1316 (TRYNNS) and 1338 to 1339 (KK).

This sequence belongs to the CRISPR-associated endoribonuclease Cas13a family. In terms of assembly, monomer. Mg(2+) serves as cofactor.

With respect to regulation, RNase activity on target is decreased by EDTA. Target RNA acts as an activator for non-specific ssRNA degradation. Its function is as follows. CRISPR (clustered regularly interspaced short palindromic repeat), is an adaptive immune system that provides protection against mobile genetic elements (viruses, transposable elements and conjugative plasmids). CRISPR clusters contain sequences complementary to antecedent mobile elements (spacers) and target invading nucleic acids. Unlike many single-component effectors, this CRISPR-Cas system targets RNA. CRISPR clusters are transcribed from pre-CRISPR RNA (crRNA) and processed into crRNA (optimally 28 nucleotides in this system) by this protein. This protein processes pre-crRNA at a 'non-typical' site 1 nucleotide upstream of the pre-crRNA stem-loop; it cleaves pre-crRNA from L.buccalis and L.wadei in a similar fashion, whereas the enzymes from the latter 2 bacteria cleave their own pre-crRNA 3 nt further upstream. When the appropriate target sequences are cloned into the CRISPR array, confers immunity to ssRNA(+) enterobacteria phage MS2. Cleaves linear target ssRNA in a crRNA-dependent fashion, preferentially before U residues; has no activity on partially dsRNA, ssDNA or dsDNA. RNA secondary structure surrounding the target influence the cleavage site and efficiency; unlike other CRISPR-Cas effectors Cas13a cleaves outside of the crRNA binding site. In the presence of a viable RNA target other RNAs are also degraded (called collateral RNA degradation), suggesting this type of CRISPR-Cas might also prevent viral spread by inducing programmed cell death or dormancy. This system has a 3' protospacer flanking site (PFS), it does not cleave when the 3' PFS is G (PFS is equivalent to PAM, the protospacer adjacent motif). Mutations of its active site residues results in an RNA-programmed RNA-binding protein. This chain is CRISPR-associated endoribonuclease Cas13a, found in Leptotrichia shahii (strain DSM 19757 / CCUG 47503 / CIP 107916 / JCM 16776 / LB37).